A 39-amino-acid chain; its full sequence is Natriuretic peptide CnNP-b (39 aa).

A propeptide spanning residues 1–8 (SGSKTATK) is cleaved from the precursor. Residues Cys12 and Cys28 are joined by a disulfide bond. The disordered stretch occupies residues 20 to 39 (IGSTSGMGCGGVPKPTPGGS).

This sequence belongs to the natriuretic peptide family. As to expression, expressed by the venom gland.

It is found in the secreted. Snake venom natriuretic peptide that targets both NPR1 and NPR2. Exhibits hypotensive and vasodepressor activities. The protein is Natriuretic peptide CnNP-b of Cryptophis nigrescens (Eastern small-eyed snake).